Here is a 363-residue protein sequence, read N- to C-terminus: Fructose-bisphosphate aldolase, muscle type (363 aa).

Substrate is bound by residues Arg-56 and Lys-147. Catalysis depends on Lys-230, which acts as the Schiff-base intermediate with dihydroxyacetone-P.

It belongs to the class I fructose-bisphosphate aldolase family. Homotetramer. Expressed mainly in the skeletal muscle, heart muscle, brain, and some other tissues, but probably not in liver.

It catalyses the reaction beta-D-fructose 1,6-bisphosphate = D-glyceraldehyde 3-phosphate + dihydroxyacetone phosphate. It participates in carbohydrate degradation; glycolysis; D-glyceraldehyde 3-phosphate and glycerone phosphate from D-glucose: step 4/4. The protein is Fructose-bisphosphate aldolase, muscle type of Lethenteron camtschaticum (Japanese lamprey).